A 178-amino-acid polypeptide reads, in one-letter code: Endothelin-2 (178 aa).

Positions 1 to 24 (MPAPGVHHPNTASPFLKTVAAGKG) are cleaved as a signal peptide. Residues 25-46 (QVAAAPEHPAPSARARGSHLRP) constitute a propeptide that is removed on maturation. Intrachain disulfides connect cysteine 49-cysteine 63 and cysteine 51-cysteine 59. The propeptide occupies 70–178 (VNTPGQTAPY…RPTHPRRRKR (109 aa)). An endothelin-like region spans residues 96–111 (CECSSGGDPACATFCH). Residues 156-178 (RFPRRPQEAGRQLRPTHPRRRKR) form a disordered region. The span at 169 to 178 (RPTHPRRRKR) shows a compositional bias: basic residues.

The protein belongs to the endothelin/sarafotoxin family.

It is found in the secreted. In terms of biological role, endothelins are endothelium-derived vasoconstrictor peptides. This Canis lupus familiaris (Dog) protein is Endothelin-2 (EDN2).